Reading from the N-terminus, the 690-residue chain is Elongation factor G (690 aa).

The region spanning 8-283 (SRCRNIGIMA…AVVDFLPSPS (276 aa)) is the tr-type G domain. GTP-binding positions include 17–24 (AHIDAGKT), 81–85 (DTPGH), and 135–138 (NKMD).

It belongs to the TRAFAC class translation factor GTPase superfamily. Classic translation factor GTPase family. EF-G/EF-2 subfamily.

It localises to the cytoplasm. In terms of biological role, catalyzes the GTP-dependent ribosomal translocation step during translation elongation. During this step, the ribosome changes from the pre-translocational (PRE) to the post-translocational (POST) state as the newly formed A-site-bound peptidyl-tRNA and P-site-bound deacylated tRNA move to the P and E sites, respectively. Catalyzes the coordinated movement of the two tRNA molecules, the mRNA and conformational changes in the ribosome. In Anaplasma marginale (strain St. Maries), this protein is Elongation factor G.